The chain runs to 597 residues: Elongation factor 4 (597 aa).

A tr-type G domain is found at 2–184 (KNIRNFSIIA…TVVQKIPAPK (183 aa)). GTP is bound by residues 14–19 (DHGKST) and 131–134 (NKID).

The protein belongs to the TRAFAC class translation factor GTPase superfamily. Classic translation factor GTPase family. LepA subfamily.

The protein resides in the cell inner membrane. The catalysed reaction is GTP + H2O = GDP + phosphate + H(+). In terms of biological role, required for accurate and efficient protein synthesis under certain stress conditions. May act as a fidelity factor of the translation reaction, by catalyzing a one-codon backward translocation of tRNAs on improperly translocated ribosomes. Back-translocation proceeds from a post-translocation (POST) complex to a pre-translocation (PRE) complex, thus giving elongation factor G a second chance to translocate the tRNAs correctly. Binds to ribosomes in a GTP-dependent manner. The polypeptide is Elongation factor 4 (Laribacter hongkongensis (strain HLHK9)).